A 346-amino-acid polypeptide reads, in one-letter code: uncharacterized protein (346 aa).

The first 28 residues, 1–28, serve as a signal peptide directing secretion; sequence MFEWMKNKKAISPILALLIVLGVTIVVG.

This is an uncharacterized protein from Methanocaldococcus jannaschii (strain ATCC 43067 / DSM 2661 / JAL-1 / JCM 10045 / NBRC 100440) (Methanococcus jannaschii).